Reading from the N-terminus, the 261-residue chain is Monensin polyketide synthase putative ketoacyl reductase (261 aa).

Residue leucine 10–phenylalanine 34 participates in NAD(+) binding. A substrate-binding site is contributed by serine 144. Residue tyrosine 157 is the Proton acceptor of the active site.

This sequence belongs to the short-chain dehydrogenases/reductases (SDR) family.

Its pathway is antifungal biosynthesis; monensin biosynthesis. In Streptomyces virginiae (Streptomyces cinnamonensis), this protein is Monensin polyketide synthase putative ketoacyl reductase.